Consider the following 438-residue polypeptide: MSAPQKPHLNIVIIGHVDHGKSTMTGHILYRLGYFDEKTVKMIEEESKKMGKESFKFAWLLDRMKEERERGVTISLSYMKFETKKYFFTIIDAPGHRDFVKNMITGASQADAAILVVSARKGEFEAGMSAEGQTREHAILARTMGINQLIVAINKMDATEPPYSEKRYNEIKEILGKFLKGLGYDVSKIPFIPISAWTGENLIERSPNMPWYNGPTLVEALDTLEVPPKPINKPLRIPIQDVYNISGIGVVPVGRVETGVLKVGDKLVFMPAGLVAEVKTIETHHTKIEKAEPGDNIGFNVKGVEKKDIKRGDVAGSLDVPPTVADEFTARIMVMWHPTAIAVGYTPVIHVHTASVACRITEIIAKIDPRTGKEIEKNPHFLKQGDIAIVKFKPIKPLVVEKYSDFQGLGRFAMRDMGKTIGIGQVLEIKPAQVNIKK.

A tr-type G domain is found at 6–229 (KPHLNIVIIG…ALDTLEVPPK (224 aa)). A G1 region spans residues 15–22 (GHVDHGKS). Residue 15–22 (GHVDHGKS) participates in GTP binding. Serine 22 is a binding site for Mg(2+). Positions 71–75 (GVTIS) are G2. Residues 92–95 (DAPG) are G3. GTP-binding positions include 92-96 (DAPGH) and 154-157 (NKMD). Positions 154–157 (NKMD) are G4. Positions 195–197 (SAW) are G5.

The protein belongs to the TRAFAC class translation factor GTPase superfamily. Classic translation factor GTPase family. EF-Tu/EF-1A subfamily.

The protein resides in the cytoplasm. The enzyme catalyses GTP + H2O = GDP + phosphate + H(+). In terms of biological role, GTP hydrolase that promotes the GTP-dependent binding of aminoacyl-tRNA to the A-site of ribosomes during protein biosynthesis. This is Elongation factor 1-alpha from Desulfurococcus mucosus (Desulfurococcus mobilis).